Here is a 117-residue protein sequence, read N- to C-terminus: Aspartate 1-decarboxylase (117 aa).

The Schiff-base intermediate with substrate; via pyruvic acid role is filled by Ser-25. Ser-25 carries the post-translational modification Pyruvic acid (Ser). Thr-57 contributes to the substrate binding site. Residue Tyr-58 is the Proton donor of the active site. 73 to 75 (GAA) is a substrate binding site.

Belongs to the PanD family. In terms of assembly, heterooctamer of four alpha and four beta subunits. Pyruvate serves as cofactor. Post-translationally, is synthesized initially as an inactive proenzyme, which is activated by self-cleavage at a specific serine bond to produce a beta-subunit with a hydroxyl group at its C-terminus and an alpha-subunit with a pyruvoyl group at its N-terminus.

The protein resides in the cytoplasm. The enzyme catalyses L-aspartate + H(+) = beta-alanine + CO2. It participates in cofactor biosynthesis; (R)-pantothenate biosynthesis; beta-alanine from L-aspartate: step 1/1. Its function is as follows. Catalyzes the pyruvoyl-dependent decarboxylation of aspartate to produce beta-alanine. This Bacteroides fragilis (strain ATCC 25285 / DSM 2151 / CCUG 4856 / JCM 11019 / LMG 10263 / NCTC 9343 / Onslow / VPI 2553 / EN-2) protein is Aspartate 1-decarboxylase.